The primary structure comprises 353 residues: Photosystem II D2 protein (353 aa).

The residue at position 2 (threonine 2) is an N-acetylthreonine. Phosphothreonine is present on threonine 2. Residues cysteine 41–threonine 61 traverse the membrane as a helical segment. Residue histidine 118 participates in chlorophyll a binding. Residues glycine 125–proline 141 traverse the membrane as a helical segment. Pheophytin a-binding residues include glutamine 130 and asparagine 143. Residues valine 153 to serine 166 form a helical membrane-spanning segment. Chlorophyll a is bound at residue histidine 198. The chain crosses the membrane as a helical span at residues alanine 208–aspartate 228. A plastoquinone is bound by residues histidine 215 and phenylalanine 262. Histidine 215 lines the Fe cation pocket. Histidine 269 provides a ligand contact to Fe cation. A helical membrane pass occupies residues glycine 279–arginine 295.

It belongs to the reaction center PufL/M/PsbA/D family. As to quaternary structure, PSII is composed of 1 copy each of membrane proteins PsbA, PsbB, PsbC, PsbD, PsbE, PsbF, PsbH, PsbI, PsbJ, PsbK, PsbL, PsbM, PsbT, PsbX, PsbY, PsbZ, Psb30/Ycf12, at least 3 peripheral proteins of the oxygen-evolving complex and a large number of cofactors. It forms dimeric complexes. The D1/D2 heterodimer binds P680, chlorophylls that are the primary electron donor of PSII, and subsequent electron acceptors. It shares a non-heme iron and each subunit binds pheophytin, quinone, additional chlorophylls, carotenoids and lipids. There is also a Cl(-1) ion associated with D1 and D2, which is required for oxygen evolution. The PSII complex binds additional chlorophylls, carotenoids and specific lipids. serves as cofactor.

Its subcellular location is the plastid. The protein localises to the chloroplast thylakoid membrane. The enzyme catalyses 2 a plastoquinone + 4 hnu + 2 H2O = 2 a plastoquinol + O2. In terms of biological role, photosystem II (PSII) is a light-driven water:plastoquinone oxidoreductase that uses light energy to abstract electrons from H(2)O, generating O(2) and a proton gradient subsequently used for ATP formation. It consists of a core antenna complex that captures photons, and an electron transfer chain that converts photonic excitation into a charge separation. The D1/D2 (PsbA/PsbD) reaction center heterodimer binds P680, the primary electron donor of PSII as well as several subsequent electron acceptors. D2 is needed for assembly of a stable PSII complex. The protein is Photosystem II D2 protein of Nicotiana tabacum (Common tobacco).